Reading from the N-terminus, the 484-residue chain is MKIPEAVNHINVQNNIDLVDGKINPNKDTKALQKNISCVTNSSSSGISEKHLDHCADTVKSFLRKSIAAQSYSKMFSQGTSFKSLNLSIEAPSGARSSFRSLEHLDKVSRHYLSEIIQKTHPLSSDERHLLSIIINSDFNFRHQSNANLSNNTLNIKSFDKIKSENIQTYKNTFSEDIEEIANHDFVFFGVEISNHQETLPLNKTHHTVDFGANAYIIDHDSPYGYMTLTDHFDNAIPPVFYHEHQSFFLDNFKEVVDEVSRYVHGNQGKTDVPIFNTKDMRLGIGLHLIDFIRKSKDQRFREFCYNKNIDPVSLDRIINFVFQLEYHIPRMLSTDNFKKIRLRDISLEDAIKASNYEEINNKVTDKKMAHQALAYSLGNAKSDMALYLLSKFNFTKQDIAEMEKMNNNMYCELYDVEYLLSEDSANYKVLEYFISNGLVDVNKRFQKANSGDTMLDNAMKSKDSKTIDFLLKNGAVSGKRFGR.

Positions 143, 144, 145, 149, 162, 172, 188, 206, 211, 231, and 326 each coordinate NAD(+). The active site involves Glu-326. ANK repeat units follow at residues 414 to 444 (LYDVEYLLSEDSANYKVLEYFISNGLVDVNK) and 451 to 480 (SGDTMLDNAMKSKDSKTIDFLLKNGAVSGK).

Belongs to the OspC family.

It localises to the secreted. It carries out the reaction L-arginyl-[protein] + NAD(+) = ADP-riboxanated L-argininyl-[protein] + nicotinamide + NH4(+) + H(+). In terms of biological role, ADP-riboxanase effector that mediates arginine ADP-riboxanation of host caspases. ADP-riboxanation of host apoptotic caspases (CASP3 and CASP9) prevents their activation, thereby inhibiting host cell extrinsic and intrinsic apoptosis. Does not catalyze ADP-riboxanation of host CASP4/CASP11 or CASP8. In contrast to Ospc1 and OspC3, not able to inactivate host calmodulin. The polypeptide is Arginine ADP-riboxanase OspC2 (Shigella flexneri).